Consider the following 456-residue polypeptide: Cysteine--tRNA ligase (456 aa).

C29 contacts Zn(2+). The 'HIGH' region motif lies at 31–41 (VTVYDYCHVGH). The Zn(2+) site is built by C210, H235, and E239. A 'KMSKS' region motif is present at residues 267–271 (KMSKS). K270 contacts ATP.

This sequence belongs to the class-I aminoacyl-tRNA synthetase family. Monomer. Zn(2+) serves as cofactor.

The protein localises to the cytoplasm. The catalysed reaction is tRNA(Cys) + L-cysteine + ATP = L-cysteinyl-tRNA(Cys) + AMP + diphosphate. The chain is Cysteine--tRNA ligase from Hydrogenovibrio crunogenus (strain DSM 25203 / XCL-2) (Thiomicrospira crunogena).